We begin with the raw amino-acid sequence, 417 residues long: D-inositol 3-phosphate glycosyltransferase (417 aa).

Residue His-15 participates in 1D-myo-inositol 3-phosphate binding. Residues 21 to 22 (QP) and Gly-29 contribute to the UDP-N-acetyl-alpha-D-glucosamine site. 1D-myo-inositol 3-phosphate contacts are provided by residues 26-31 (DAGGMN), Lys-84, Tyr-117, Thr-141, and Arg-161. UDP-N-acetyl-alpha-D-glucosamine is bound by residues Arg-241, Lys-246, and Val-299. Residues Tyr-308, Arg-309, and Ala-311 each coordinate Mg(2+). UDP-N-acetyl-alpha-D-glucosamine contacts are provided by Glu-321 and Glu-329. Thr-335 serves as a coordination point for Mg(2+).

Belongs to the glycosyltransferase group 1 family. MshA subfamily. In terms of assembly, homodimer.

It carries out the reaction 1D-myo-inositol 3-phosphate + UDP-N-acetyl-alpha-D-glucosamine = 1D-myo-inositol 2-acetamido-2-deoxy-alpha-D-glucopyranoside 3-phosphate + UDP + H(+). In terms of biological role, catalyzes the transfer of a N-acetyl-glucosamine moiety to 1D-myo-inositol 3-phosphate to produce 1D-myo-inositol 2-acetamido-2-deoxy-glucopyranoside 3-phosphate in the mycothiol biosynthesis pathway. This Xylanimonas cellulosilytica (strain DSM 15894 / JCM 12276 / CECT 5975 / KCTC 9989 / LMG 20990 / NBRC 107835 / XIL07) protein is D-inositol 3-phosphate glycosyltransferase.